Reading from the N-terminus, the 374-residue chain is Cell division protein DivIB (374 aa).

The interval 1–90 is disordered; the sequence is MWKISNENDI…EEEHFADRLP (90 aa). At 1–103 the chain is on the cytoplasmic side; the sequence is MWKISNENDI…KTRNKRLYRR (103 aa). The segment covering 39 to 53 has biased composition (basic and acidic residues); that stretch reads YLKKQAEEAASKGEN. A compositionally biased stretch (polar residues) spans 56-75; that stretch reads AEVTITLQEQSQEEPQQHLP. A helical transmembrane segment spans residues 104–124; the sequence is LAFILTCLGTAILVALYFVSP. At 125-374 the chain is on the extracellular side; it reads LSRLSEVTVS…GENQEVQQAE (250 aa). The region spanning 126 to 197 is the POTRA domain; it reads SRLSEVTVSG…NSFKIDIQEY (72 aa). Positions 325–374 are disordered; the sequence is KESEETGSEVSEDSAVENQEVVDPNAGVATDGANNGTPTNGENQEVQQAE. Residues 326–339 are compositionally biased toward acidic residues; the sequence is ESEETGSEVSEDSA. Positions 356–374 are enriched in polar residues; sequence GANNGTPTNGENQEVQQAE.

This sequence belongs to the FtsQ/DivIB family. DivIB subfamily.

The protein localises to the cell membrane. In terms of biological role, cell division protein that may be involved in stabilizing or promoting the assembly of the division complex. This Enterococcus faecalis (strain 62) protein is Cell division protein DivIB.